Here is a 626-residue protein sequence, read N- to C-terminus: UvrABC system protein C (626 aa).

A GIY-YIG domain is found at 25 to 104; sequence TSPGVYRFSN…IKELKPRYNV (80 aa). Residues 218–253 form the UVR domain; that stretch reads SALLRDLSAEMQKKAKELKFEEAAALKAQIEGLKRY.

Belongs to the UvrC family. In terms of assembly, interacts with UvrB in an incision complex.

The protein resides in the cytoplasm. Functionally, the UvrABC repair system catalyzes the recognition and processing of DNA lesions. UvrC both incises the 5' and 3' sides of the lesion. The N-terminal half is responsible for the 3' incision and the C-terminal half is responsible for the 5' incision. This is UvrABC system protein C from Chlorobaculum tepidum (strain ATCC 49652 / DSM 12025 / NBRC 103806 / TLS) (Chlorobium tepidum).